Reading from the N-terminus, the 382-residue chain is Putative UDP-sugar transporter DDB_G0278631 (382 aa).

Helical transmembrane passes span 117-137 (FSASNFLLFNQMVVTIVILHI), 183-203 (MYSALKRLVAVVILVMEYFIL), 211-231 (IIASVVVMVIGAVVAGITDLS), 234-254 (SLGYSLVLLSCIFQASYLIYV), 264-284 (YDMLYYNSVLSLPITIFLMIV), 302-322 (FQAYFILSIFLGFFLNFCIFF), and 354-374 (IIIHPINILGLIINIIGSIWY).

It belongs to the TPT transporter family. SLC35D subfamily.

It localises to the membrane. In terms of biological role, may be nvolved in the import of UDP-sugars. This is Putative UDP-sugar transporter DDB_G0278631 from Dictyostelium discoideum (Social amoeba).